The chain runs to 330 residues: ADP-L-glycero-D-manno-heptose-6-epimerase (330 aa).

NADP(+) contacts are provided by residues 11–12 (FI), 32–33 (DN), K39, K54, 75–79 (EGACS), and N92. The active-site Proton acceptor is Y139. K143 contributes to the NADP(+) binding site. N168 is a binding site for substrate. Residues V169 and K177 each coordinate NADP(+). The active-site Proton acceptor is the K177. Substrate contacts are provided by residues R179, H186, 200–203 (FGEY), R213, and Y292.

This sequence belongs to the NAD(P)-dependent epimerase/dehydratase family. HldD subfamily. In terms of assembly, homopentamer. The cofactor is NADP(+).

The catalysed reaction is ADP-D-glycero-beta-D-manno-heptose = ADP-L-glycero-beta-D-manno-heptose. The protein operates within nucleotide-sugar biosynthesis; ADP-L-glycero-beta-D-manno-heptose biosynthesis; ADP-L-glycero-beta-D-manno-heptose from D-glycero-beta-D-manno-heptose 7-phosphate: step 4/4. Its function is as follows. Catalyzes the interconversion between ADP-D-glycero-beta-D-manno-heptose and ADP-L-glycero-beta-D-manno-heptose via an epimerization at carbon 6 of the heptose. The chain is ADP-L-glycero-D-manno-heptose-6-epimerase from Burkholderia cenocepacia (strain ATCC BAA-245 / DSM 16553 / LMG 16656 / NCTC 13227 / J2315 / CF5610) (Burkholderia cepacia (strain J2315)).